The chain runs to 412 residues: Multifunctional CCA protein (412 aa).

ATP-binding residues include glycine 8 and arginine 11. Glycine 8 and arginine 11 together coordinate CTP. Residues aspartate 21 and aspartate 23 each contribute to the Mg(2+) site. Positions 91, 137, and 140 each coordinate ATP. CTP is bound by residues arginine 91, arginine 137, and arginine 140. The HD domain occupies 228–329 (TGIHTLMTLS…VKLFDSIDAW (102 aa)).

This sequence belongs to the tRNA nucleotidyltransferase/poly(A) polymerase family. Bacterial CCA-adding enzyme type 1 subfamily. Monomer. Can also form homodimers and oligomers. The cofactor is Mg(2+). Ni(2+) is required as a cofactor.

It carries out the reaction a tRNA precursor + 2 CTP + ATP = a tRNA with a 3' CCA end + 3 diphosphate. The enzyme catalyses a tRNA with a 3' CCA end + 2 CTP + ATP = a tRNA with a 3' CCACCA end + 3 diphosphate. Its function is as follows. Catalyzes the addition and repair of the essential 3'-terminal CCA sequence in tRNAs without using a nucleic acid template. Adds these three nucleotides in the order of C, C, and A to the tRNA nucleotide-73, using CTP and ATP as substrates and producing inorganic pyrophosphate. tRNA 3'-terminal CCA addition is required both for tRNA processing and repair. Also involved in tRNA surveillance by mediating tandem CCA addition to generate a CCACCA at the 3' terminus of unstable tRNAs. While stable tRNAs receive only 3'-terminal CCA, unstable tRNAs are marked with CCACCA and rapidly degraded. This is Multifunctional CCA protein from Escherichia coli O81 (strain ED1a).